The primary structure comprises 73 residues: Neurogranin (73 aa).

The 30-residue stretch at 26–55 folds into the IQ domain; sequence ANAAAAKIQASFRGHMTRKKIKGGEIDRKT. The residue at position 36 (serine 36) is a Phosphoserine; by PKC. The segment covering 47-59 has biased composition (basic and acidic residues); that stretch reads KGGEIDRKTKDAE. The tract at residues 47–73 is disordered; that stretch reads KGGEIDRKTKDAECANSTRGGDLRNGD.

The protein belongs to the neurogranin family.

In terms of biological role, acts as a 'third messenger' substrate of protein kinase C-mediated molecular cascades during synaptic development and remodeling. Binds to calmodulin in the absence of calcium. In Serinus canaria (Island canary), this protein is Neurogranin (NRGN).